The primary structure comprises 111 residues: Putative pterin-4-alpha-carbinolamine dehydratase (111 aa).

The protein belongs to the pterin-4-alpha-carbinolamine dehydratase family.

The enzyme catalyses (4aS,6R)-4a-hydroxy-L-erythro-5,6,7,8-tetrahydrobiopterin = (6R)-L-erythro-6,7-dihydrobiopterin + H2O. The sequence is that of Putative pterin-4-alpha-carbinolamine dehydratase from Alkaliphilus metalliredigens (strain QYMF).